A 209-amino-acid polypeptide reads, in one-letter code: Protein phosphotransferase ChpT (209 aa).

The residue at position 22 (His-22) is a Phosphohistidine.

It belongs to the ChpT phosphotransferase family. Homodimer. Forms an asymmetric heterotetramer with CtrA (2:2). There are at least two modes of interaction between ChpT and CtrA, only one of which is competent to catalyze His-Asp phosphoryl transfer. In terms of processing, is phosphorylated by CckA-P on His-22.

It localises to the cytoplasm. Component of a regulatory phosphorelay system that controls B.abortus cell growth, division, and intracellular survival inside mammalian host cells. This signaling pathway is composed of CckA, ChpT, CtrA and CpdR. ChpT efficiently and specifically shuttles phosphoryl groups from the CckA kinase to the receiver domains of both CtrA and CpdR. Does not bind ATP. Overexpression of chpT results in a defect in cell morphology, DNA content, and intracellular survival in human macrophages. The sequence is that of Protein phosphotransferase ChpT from Brucella abortus (strain 2308).